Consider the following 376-residue polypeptide: MSPPNQSEEGLPQEASNRSLNATETPGDWDPGLLQALKVSLVVVLSIITLATVLSNAFVLTTILLTRKLHTPANYLIGSLATTDLLVSILVMPISIAYTTTRTWNFGQILCDIWVSSDITCCTASILHLCVIALDRYWAITDALEYSKRRTAGHAGAMIAAVWVISICISIPPLFWRQAQAQEEMSDCLVNTSQISYTIYSTCGAFYIPSVLLIILYSRIYRAARSRILNPPSLSGKRFTTAHLITGSAGSSLCSLNPSLHEGHMHPGSPLFFNHVRIKLADSVLERKRISAARERKATKTLGIILGAFIVCWLPFFVVSLVLPICRDSCWIHPALFDFFTWLGYLNSLINPIIYTVFNEDFRQAFQKVVHFRKAS.

A disordered region spans residues 1 to 22; the sequence is MSPPNQSEEGLPQEASNRSLNA. N-linked (GlcNAc...) asparagine glycosylation is found at Asn5, Asn17, and Asn21. Helical transmembrane passes span 39-64, 76-97, and 110-134; these read VSLV…TTIL, LIGS…ISIA, and LCDI…VIAL. Cys111 and Cys188 form a disulfide bridge. Serotonin is bound by residues Asp118 and Cys122. The DRY motif; important for ligand-induced conformation changes motif lies at 135–137; the sequence is DRY. 4 helical membrane-spanning segments follow: residues 155–176, 195–218, 300–325, and 335–358; these read AGAM…PLFW, ISYT…ILYS, KTLG…VLPI, and ALFD…YTVF. Position 320 (Ser320) interacts with serotonin. The short motif at 351–355 is the NPxxY motif; important for ligand-induced conformation changes and signaling element; that stretch reads NPIIY.

It belongs to the G-protein coupled receptor 1 family. As to quaternary structure, homodimer. Heterodimer with HTR1B.

It localises to the cell membrane. Functionally, G-protein coupled receptor for 5-hydroxytryptamine (serotonin). Also functions as a receptor for ergot alkaloid derivatives, various anxiolytic and antidepressant drugs and other psychoactive substances. Ligand binding causes a conformation change that triggers signaling via guanine nucleotide-binding proteins (G proteins) and modulates the activity of downstream effectors, such as adenylate cyclase. HTR1D is coupled to G(i)/G(o) G alpha proteins and mediates inhibitory neurotransmission by inhibiting adenylate cyclase activity. Regulates the release of 5-hydroxytryptamine in the brain, and thereby affects neural activity. May also play a role in regulating the release of other neurotransmitters. May play a role in vasoconstriction. This Cavia porcellus (Guinea pig) protein is 5-hydroxytryptamine receptor 1D (HTR1D).